Consider the following 169-residue polypeptide: Steroid receptor-associated and regulated protein (169 aa).

Interacts with 14-3-3 proteins. In terms of tissue distribution, expressed in breast tumors with a higher expression level in estrogen receptor-positive cancers.

May regulate the transcriptional function of androgen and estrogen receptors. This Homo sapiens (Human) protein is Steroid receptor-associated and regulated protein.